Reading from the N-terminus, the 669-residue chain is Small ribosomal subunit protein mS39 (669 aa).

The transit peptide at 1-13 (MAAPCVRLGSVRC) directs the protein to the mitochondrion. PPR repeat units lie at residues 129–163 (IEGV…GTAP), 164–199 (SLET…DDQD), 209–239 (RPGQ…MPER), 240–274 (NAHS…RLTA), 275–314 (DVQT…NVRP), 315–351 (NLLT…NIEP), 352–392 (SLGT…FTLR), 396–430 (DVYF…DNRG), 438–472 (QSTY…LYYP), 473–507 (NSRG…GHSN), and 556–590 (SSAS…HRVP). The segment at 186–218 (DIQTSEQNQQDDQDQQETEDSKKRPGQYRKASE) is disordered. Positions 194 to 203 (QQDDQDQQET) are enriched in acidic residues. The segment at 648 to 669 (EDLQKSHSSSSSSSESSDSDRE) is disordered. Low complexity predominate over residues 653–663 (SHSSSSSSSES).

Belongs to the mitochondrion-specific ribosomal protein mS39 family.

The protein resides in the mitochondrion. In terms of biological role, mitochondrial protein that may have a role in mitochondrial translation. In Xenopus laevis (African clawed frog), this protein is Small ribosomal subunit protein mS39 (ptcd3).